A 332-amino-acid chain; its full sequence is Adenine deaminase (332 aa).

Zn(2+)-binding residues include His16, His18, and His196. Glu199 acts as the Proton donor in catalysis. A Zn(2+)-binding site is contributed by Asp277. Asp278 is a substrate binding site.

This sequence belongs to the metallo-dependent hydrolases superfamily. Adenosine and AMP deaminases family. Adenine deaminase type 2 subfamily. Requires Zn(2+) as cofactor.

It catalyses the reaction adenine + H2O + H(+) = hypoxanthine + NH4(+). Functionally, catalyzes the hydrolytic deamination of adenine to hypoxanthine. Plays an important role in the purine salvage pathway and in nitrogen catabolism. The chain is Adenine deaminase from Acinetobacter baylyi (strain ATCC 33305 / BD413 / ADP1).